A 41-amino-acid chain; its full sequence is Large ribosomal subunit protein bL36 (41 aa).

The protein belongs to the bacterial ribosomal protein bL36 family.

In Caulobacter vibrioides (strain ATCC 19089 / CIP 103742 / CB 15) (Caulobacter crescentus), this protein is Large ribosomal subunit protein bL36.